The primary structure comprises 114 residues: uncharacterized protein (114 aa).

Residues Glu-2–Leu-97 enclose the HTH arsR-type domain. Positions Gly-37–Arg-60 form a DNA-binding region, H-T-H motif.

This is an uncharacterized protein from Mycobacterium tuberculosis (strain CDC 1551 / Oshkosh).